The chain runs to 465 residues: Soluble pyridine nucleotide transhydrogenase (465 aa).

Residue 36-45 (ERYDNVGGGC) participates in FAD binding.

It belongs to the class-I pyridine nucleotide-disulfide oxidoreductase family. It depends on FAD as a cofactor.

Its subcellular location is the cytoplasm. It carries out the reaction NAD(+) + NADPH = NADH + NADP(+). Its function is as follows. Conversion of NADPH, generated by peripheral catabolic pathways, to NADH, which can enter the respiratory chain for energy generation. This Sodalis glossinidius (strain morsitans) protein is Soluble pyridine nucleotide transhydrogenase.